A 1270-amino-acid chain; its full sequence is MLAKQTERLSFSSVKNKPAYPDFLDLQIKSFQDFFQLETKSEERGNEGLYNTFLENFPITDTRNQFVLEFLDYFVDPPRYSIQECIERGLTYSVPLKARLKLYCTDPEHEDFETIVQDVYLGTIPYMTPSGTFCINGAERVVVSQLHRSPGVFFGQSFHANGTKLYSARVIPFKGSWIEFATDINSVMYAYIDRKKKLPVTTLFRAIGFERDKDILEIFDLAEEVKVSKTGLKKYLGRKLAARVLNTWYEDFVDEDTGEVVSIERNEIVLDRDTELEKDHIEEILETGSKTILLHKEDNQTGDYAIIHNTLQKDPTNSEKEAVEHIYRQLRNAEPPDEETARGIIDKLFFSDQRYSLGEVGRYRMNKKLGLDVEMDKQVLTKLDIITIVKYLIELINSKAEIDDIDHLSNRRVRTVGEQLSQQFGVGLARMARTIRERMNVRDNEVFTPIDLINAKTLSSVINSFFGTNQLSQFMDQTNPLAEITHKRRLSALGPGGLSRERAGFEVRDVHYTHYGRLCPIETPEGPNIGLISSLSVYAKVNGMGFIETPYRSVTDGKINTSEEPIYLSAEEEEGKKIAQANIPLKDDGTIDTDRVIARMEGDFPVVDPKEIHYTDVAPNQISSISASLIPFLEHDDANRALMGSNMMRQAVPLLRTDSPIVGTGLERQVATDSRVLINAEGEGEVEYVDANKIVIKYDRTEEERMVSFDDDSKSYNLIKFRKTNQGSCINLKPIISVGDRVTKGQVLCQGYATEAGELALGRNMKVAFMPWKGYNFEDAIVISEKVVRDDIFTSIHIDEYSLEVRDTKLGNEELTNDIPNVSEEATKDLDEHGMIRVGAEVKPGDILIGKITPKGESDPTPEEKLLRAIFGDKAGDVKDASLKASPSLSGVVINKKLFARAIKDKRKRAQDKEDVAALEKKYDAKFANLKADLVEKLFTIIGGKTAQGVQNDLGEEVMPKGKKYTLKMLNAVDDYTHLTTGTWTTDDHLNELVADLLHNYKIKENDLQGNLRREKFTVSVGDELPSGILKLAKVYIAKKRKLKVGDKMAGRHGNKGIVARIVRQEDMPFLEDGTPVDIVLNPLGVPSRMNIGQIYETVLGWAGQKNGKKYATPIFDGATIEEINDLTDKAGIPRYGHTYLYDGGTGMRFDQRATVGVIYMLKLGHMIDDKMHARSIGPYSLITQQPLGGKAQFGGQRFGEMEVWALEAYGASATLREILTVKSDDVIGRAKTYEAIVKGEPMPEPGLPESFNVLMHELKGLGLDIKLEE.

Belongs to the RNA polymerase beta chain family. As to quaternary structure, the RNAP catalytic core consists of 2 alpha, 1 beta, 1 beta' and 1 omega subunit. When a sigma factor is associated with the core the holoenzyme is formed, which can initiate transcription.

It carries out the reaction RNA(n) + a ribonucleoside 5'-triphosphate = RNA(n+1) + diphosphate. Functionally, DNA-dependent RNA polymerase catalyzes the transcription of DNA into RNA using the four ribonucleoside triphosphates as substrates. This chain is DNA-directed RNA polymerase subunit beta, found in Christiangramia forsetii (strain DSM 17595 / CGMCC 1.15422 / KT0803) (Gramella forsetii).